A 604-amino-acid polypeptide reads, in one-letter code: Putative JmjC domain-containing protein L887 (604 aa).

In terms of domain architecture, JmjC spans Met1–Pro127. Residues Met4–Ile24 form a helical membrane-spanning segment.

Its subcellular location is the membrane. This is Putative JmjC domain-containing protein L887 from Acanthamoeba polyphaga (Amoeba).